Consider the following 186-residue polypeptide: piRNA-mediated silencing protein C19orf84 (186 aa).

Disordered regions lie at residues 1–42 (MEQP…NSTD) and 89–186 (SQAG…ETEY). Residues 13 to 22 (NNLSLPSSGT) are compositionally biased toward polar residues. A compositionally biased stretch (pro residues) spans 24-36 (PWPPAPLPAPPPL). A compositionally biased stretch (basic residues) spans 114–126 (RPGWGRGLHRRGL). Positions 145–157 (RTPPMTLPSPPTL) are enriched in pro residues.

As to quaternary structure, interacts with SPOCD1.

Its subcellular location is the nucleus. It is found in the nucleoplasm. Functionally, protein adapter involved in piRNA-directed transposon methylation by connecting PIWIL4-piRNA and DNA methylation machineries. The PIWIL4-piRNA pathway plays a central role during spermatogenesis by directing transposon DNA methylation and silencing, thereby preventing their mobilization, which is essential for the germline integrity. In Homo sapiens (Human), this protein is piRNA-mediated silencing protein C19orf84.